The chain runs to 92 residues: Signal peptidase complex subunit 1 (92 aa).

Topologically, residues 1–12 (MDWQGQKLVEQL) are cytoplasmic. The helical transmembrane segment at 13–30 (MQILLVISGVVAVVVGYT) threads the bilayer. Residues 31 to 36 (TESFRT) lie on the Lumenal side of the membrane. Residues 37 to 59 (MMLIYAGGVVLTTLVTVPNWPFY) traverse the membrane as a helical segment. Topologically, residues 60–92 (NLHPLKWLDPSEAEKHPKPEVVSVASKKKFSKK) are cytoplasmic. Residues 73–92 (EKHPKPEVVSVASKKKFSKK) are disordered.

Belongs to the SPCS1 family. In terms of assembly, component of the signal peptidase complex (SPC) composed of a catalytic subunit SEC11 and three accessory subunits SPCS1, SPCS2 and SPCS3. The complex induces a local thinning of the ER membrane which is used to measure the length of the signal peptide (SP) h-region of protein substrates. This ensures the selectivity of the complex towards h-regions shorter than 18-20 amino acids.

It is found in the endoplasmic reticulum membrane. Functionally, component of the signal peptidase complex (SPC) which catalyzes the cleavage of N-terminal signal sequences from nascent proteins as they are translocated into the lumen of the endoplasmic reticulum. Dispensable for SPC enzymatic activity. The sequence is that of Signal peptidase complex subunit 1 from Arabidopsis thaliana (Mouse-ear cress).